The sequence spans 971 residues: 116 kDa U5 small nuclear ribonucleoprotein component (971 aa).

N-acetylmethionine is present on Met-1. Residues Met-1–Pro-52 form a disordered region. The segment covering Leu-17–His-47 has biased composition (acidic residues). Ser-19 carries the phosphoserine modification. Residue Lys-63 forms a Glycyl lysine isopeptide (Lys-Gly) (interchain with G-Cter in SUMO1); alternate linkage. Lys-63 participates in a covalent cross-link: Glycyl lysine isopeptide (Lys-Gly) (interchain with G-Cter in SUMO2); alternate. Position 85 is a phosphothreonine (Thr-85). A tr-type G domain is found at Glu-126–Lys-408. GTP-binding positions include Gly-135–Thr-142, Asp-203–His-207, and Asn-257–Asp-260.

It belongs to the TRAFAC class translation factor GTPase superfamily. Classic translation factor GTPase family. EF-G/EF-2 subfamily. Component of the U5 snRNP and the U4/U6-U5 tri-snRNP complex, a building block of the spliceosome. The U4/U6-U5 tri-snRNP complex is composed of the U4, U6 and U5 snRNAs and at least PRPF3, PRPF4, PRPF6, PRPF8, PRPF31, SNRNP200, TXNL4A, SNRNP40, DDX23, CD2BP2, PPIH, SNU13, EFTUD2, SART1 and USP39. Component of the pre-catalytic, catalytic and post-catalytic spliceosome complexes. Component of the minor spliceosome, which splices U12-type introns. Within this complex, interacts with CRIPT. Interacts with ERBB4 and PRPF8. Interacts with PIH1D1. Interacts with RPAP3 and URI1 in a ZNHIT2-dependent manner. Interacts with NRDE2. Interacts with FAM50A. Interacts with UBL5.

It localises to the nucleus. In terms of biological role, required for pre-mRNA splicing as component of the spliceosome, including pre-catalytic, catalytic and post-catalytic spliceosomal complexes. Component of the U5 snRNP and the U4/U6-U5 tri-snRNP complex, a building block of the spliceosome. As a component of the minor spliceosome, involved in the splicing of U12-type introns in pre-mRNAs. This is 116 kDa U5 small nuclear ribonucleoprotein component (Eftud2) from Mus musculus (Mouse).